Reading from the N-terminus, the 887-residue chain is Centrobin (887 aa).

Residues 1-34 form a disordered region; sequence MATAAPSPSSPLRPEDLLSDSSEPPGLNQVSSEV. S81 is modified (phosphoserine). Disordered stretches follow at residues 110 to 153, 465 to 486, 566 to 591, and 636 to 695; these read MLHT…PSSS, SLRQAASLRDHHRKQLQELSGQ, TLLPPNPQAPLAEPSSPGPLEPEKGE, and LGPP…LPPA. A compositionally biased stretch (basic and acidic residues) spans 113 to 128; that stretch reads TSRDTAYRTGSERREE. Residues 133–153 are compositionally biased toward polar residues; the sequence is SDSTATLLNTRPLQDLSPSSS. Residues 191-557 are a coiled coil; the sequence is RRKHCERHIQ…LQAMLQAHWE (367 aa). The tract at residues 360-887 is required for centrosome localization; sequence QEHQLKERLQ…SMRSRGGIWR (528 aa). The span at 670–680 shows a compositional bias: basic and acidic residues; the sequence is TDDHRAERPFP. Residue S782 is modified to Phosphoserine. The disordered stretch occupies residues 824 to 887; sequence GTDGQGELVP…SMRSRGGIWR (64 aa). Positions 832–849 are enriched in basic and acidic residues; it reads VPRRNTDSRLGETTRKEI.

As to quaternary structure, interacts with LYST.

The protein resides in the cytoplasm. Its subcellular location is the cytoskeleton. It localises to the microtubule organizing center. It is found in the centrosome. The protein localises to the centriole. Its function is as follows. Required for centriole duplication. Inhibition of centriole duplication leading to defects in cytokinesis. This chain is Centrobin (Cntrob), found in Mus musculus (Mouse).